The chain runs to 319 residues: Ciliary microtubule inner protein 2A (319 aa).

This sequence belongs to the CIMIP2 family. As to quaternary structure, microtubule inner protein component of sperm flagellar doublet microtubules.

It localises to the cytoplasm. Its subcellular location is the cytoskeleton. The protein resides in the flagellum axoneme. Its function is as follows. Microtubule inner protein (MIP) part of the dynein-decorated doublet microtubules (DMTs) in flagellum axoneme. Binds to the intra-tubulin interfaces. The protein is Ciliary microtubule inner protein 2A (Cimip2a) of Mus musculus (Mouse).